A 343-amino-acid chain; its full sequence is Uroporphyrinogen decarboxylase (343 aa).

Substrate-binding positions include 23–27 (RQAGR), Asp73, Tyr150, Ser205, and His322.

Belongs to the uroporphyrinogen decarboxylase family. As to quaternary structure, homodimer.

It localises to the cytoplasm. It carries out the reaction uroporphyrinogen III + 4 H(+) = coproporphyrinogen III + 4 CO2. The protein operates within porphyrin-containing compound metabolism; protoporphyrin-IX biosynthesis; coproporphyrinogen-III from 5-aminolevulinate: step 4/4. In terms of biological role, catalyzes the decarboxylation of four acetate groups of uroporphyrinogen-III to yield coproporphyrinogen-III. In Cereibacter sphaeroides (strain ATCC 17025 / ATH 2.4.3) (Rhodobacter sphaeroides), this protein is Uroporphyrinogen decarboxylase.